Reading from the N-terminus, the 266-residue chain is Hydroxyethylthiazole kinase (266 aa).

Methionine 46 contributes to the substrate binding site. ATP is bound by residues lysine 122 and threonine 166. Glycine 193 is a substrate binding site.

This sequence belongs to the Thz kinase family. The cofactor is Mg(2+).

The catalysed reaction is 5-(2-hydroxyethyl)-4-methylthiazole + ATP = 4-methyl-5-(2-phosphooxyethyl)-thiazole + ADP + H(+). It functions in the pathway cofactor biosynthesis; thiamine diphosphate biosynthesis; 4-methyl-5-(2-phosphoethyl)-thiazole from 5-(2-hydroxyethyl)-4-methylthiazole: step 1/1. Its function is as follows. Catalyzes the phosphorylation of the hydroxyl group of 4-methyl-5-beta-hydroxyethylthiazole (THZ). The sequence is that of Hydroxyethylthiazole kinase from Caldivirga maquilingensis (strain ATCC 700844 / DSM 13496 / JCM 10307 / IC-167).